We begin with the raw amino-acid sequence, 378 residues long: mRNA cap guanine-N(7) methyltransferase (378 aa).

Residues 24–331 enclose the mRNA cap 0 methyltransferase domain; that stretch reads SRIFFMRNMN…MYLVFGFRKK (308 aa). Position 33–34 (33–34) interacts with mRNA; sequence NN. Residues Lys37, Ala62, Asp84, Asp116, Gln138, and Tyr143 each contribute to the S-adenosyl-L-methionine site. 2 stretches are compositionally biased toward basic and acidic residues: residues 335 to 347 and 356 to 378; these read EKNL…EIKK and DTDK…PSHC. The tract at residues 335 to 378 is disordered; sequence EKNLESEAPEIKKVTPVPLNEDTDKTAEKNEERIEEKEENPSHC.

This sequence belongs to the class I-like SAM-binding methyltransferase superfamily. mRNA cap 0 methyltransferase family.

It is found in the nucleus. The enzyme catalyses a 5'-end (5'-triphosphoguanosine)-ribonucleoside in mRNA + S-adenosyl-L-methionine = a 5'-end (N(7)-methyl 5'-triphosphoguanosine)-ribonucleoside in mRNA + S-adenosyl-L-homocysteine. Its function is as follows. mRNA-capping methyltransferase that methylates the N7 position of the added guanosine to the 5'-cap structure of mRNAs. Binds RNA containing 5'-terminal GpppC. In Caenorhabditis briggsae, this protein is mRNA cap guanine-N(7) methyltransferase.